Here is an 82-residue protein sequence, read N- to C-terminus: Small ribosomal subunit protein eS17 (82 aa).

It belongs to the eukaryotic ribosomal protein eS17 family.

The chain is Small ribosomal subunit protein eS17 from Sulfolobus acidocaldarius (strain ATCC 33909 / DSM 639 / JCM 8929 / NBRC 15157 / NCIMB 11770).